The chain runs to 356 residues: sn-glycerol-3-phosphate import ATP-binding protein UgpC (356 aa).

Residues 4 to 235 (LKLQAVTKSW…PASRFVASFI (232 aa)) form the ABC transporter domain. 37–44 (GPSGCGKS) serves as a coordination point for ATP.

It belongs to the ABC transporter superfamily. sn-glycerol-3-phosphate importer (TC 3.A.1.1.3) family. As to quaternary structure, the complex is composed of two ATP-binding proteins (UgpC), two transmembrane proteins (UgpA and UgpE) and a solute-binding protein (UgpB).

The protein localises to the cell inner membrane. It catalyses the reaction sn-glycerol 3-phosphate(out) + ATP + H2O = sn-glycerol 3-phosphate(in) + ADP + phosphate + H(+). Functionally, part of the ABC transporter complex UgpBAEC involved in sn-glycerol-3-phosphate (G3P) import. Responsible for energy coupling to the transport system. The sequence is that of sn-glycerol-3-phosphate import ATP-binding protein UgpC from Salmonella typhimurium (strain LT2 / SGSC1412 / ATCC 700720).